The sequence spans 1054 residues: Calcium-transporting ATPase 2, endoplasmic reticulum-type (1054 aa).

The Cytoplasmic segment spans residues 1-53 (MEEEKSFSAWSWSVEQCLKEYKTRLDKGLTSEDVQIRRQKYGFNELAKEKGKP). A helical transmembrane segment spans residues 54-74 (LWHLVLEQFDDTLVKILLGAA). Residues 75-98 (FISFVLAFLGEEHGSGSGFEAFVE) lie on the Lumenal side of the membrane. A helical membrane pass occupies residues 99–118 (PFVIVLILILNAVVGVWQES). Residues 119–262 (NAEKALEALK…ESETPLKKKL (144 aa)) are Cytoplasmic-facing. The chain crosses the membrane as a helical span at residues 263-282 (DEFGSRLTTAICIVCVLVWM). The Lumenal segment spans residues 283-312 (INYKNFVSWDVVDGYKPVNIKFSFEKCTYY). A helical membrane pass occupies residues 313–330 (FKIAVALAVAAIPEGLPA). Ca(2+)-binding residues include Val321, Ala322, Ile324, and Glu326. The Cytoplasmic segment spans residues 331–782 (VITTCLALGT…AEGRSIYNNM (452 aa)). Asp368 acts as the 4-aspartylphosphate intermediate in catalysis. Residues Asp727 and Asp731 each coordinate Mg(2+). Residues 783–802 (KAFIRYMISSNVGEVISIFL) form a helical membrane-spanning segment. Positions 793 and 796 each coordinate Ca(2+). Topologically, residues 803–812 (TAALGIPECM) are lumenal. Residues 813-833 (IPVQLLWVNLVTDGPPATALG) form a helical membrane-spanning segment. Ca(2+) is bound by residues Asn821, Thr824, and Asp825. Residues 834-853 (FNPADIDIMKKPPRKSDDCL) lie on the Cytoplasmic side of the membrane. The chain crosses the membrane as a helical span at residues 854-876 (IDSWVLIRYLVIGSYVGVATVGI). Topologically, residues 877–949 (FVLWYTQASF…YFTLGKVKPM (73 aa)) are lumenal. The chain crosses the membrane as a helical span at residues 950–969 (TLSLTVLVAIEMFNSLNALS). Residue Glu960 participates in Ca(2+) binding. The Cytoplasmic segment spans residues 970–982 (EDNSLLTMPPWRN). The helical transmembrane segment at 983 to 1001 (PWLLVAMTVSFALHCVILY) threads the bilayer. Residues 1002-1016 (VPFLANVFGIVPLSF) lie on the Lumenal side of the membrane. A helical transmembrane segment spans residues 1017–1037 (REWFVVILVSFPVILIDEALK). Residues 1038-1054 (FIGRCRRTRIKKKIKTM) are Cytoplasmic-facing.

It belongs to the cation transport ATPase (P-type) (TC 3.A.3) family. Type IIA subfamily.

It localises to the membrane. It catalyses the reaction Ca(2+)(in) + ATP + H2O = Ca(2+)(out) + ADP + phosphate + H(+). Functionally, this magnesium-dependent enzyme catalyzes the hydrolysis of ATP coupled with the translocation of calcium from the cytosol to an endomembrane compartment. The protein is Calcium-transporting ATPase 2, endoplasmic reticulum-type (ECA2) of Arabidopsis thaliana (Mouse-ear cress).